The primary structure comprises 354 residues: Muscleblind-like protein 3 (354 aa).

4 consecutive C3H1-type zinc fingers follow at residues 14–42 (WLTL…HPPR), 48–74 (NGRV…HPPP), 174–202 (SDKL…HPTD), and 210–236 (DNTV…HPPA).

The protein belongs to the muscleblind family. Highly expressed in the placenta.

It is found in the nucleus. Its subcellular location is the cytoplasm. In terms of biological role, mediates pre-mRNA alternative splicing regulation. Acts either as activator or repressor of splicing on specific pre-mRNA targets. Inhibits cardiac troponin-T (TNNT2) pre-mRNA exon inclusion but induces insulin receptor (IR) pre-mRNA exon inclusion in muscle. Antagonizes the alternative splicing activity pattern of CELF proteins. May play a role in myotonic dystrophy pathophysiology (DM). Could inhibit terminal muscle differentiation, acting at approximately the time of myogenin induction. The polypeptide is Muscleblind-like protein 3 (MBNL3) (Homo sapiens (Human)).